The following is a 2124-amino-acid chain: MGANNSKESVSSNGNEGTIVNNFYSNQYYASIDASAQGVGTSTTPENGNVSGFLGLAGSAFNALSLLASPRTETGMMMEDRVLSRTAGNTSVNSQAAEGVLQAYGTETDSNSPTSCGDDPSKGTHATDRAFVIQLLPWKQTTNSYFAQWVRLTQKLSNNLHGNVMAKNIKSHAFAKMGFEVMLQANTSPFHNGILGLFLVPEFVRKGEITDEWIDLTPTSSLVSNTELYNPQTYANFPFDAKHSFDYSDITPEQFMIFPHQLINPKDTNVATVRVPYINIAPTNDTTVHTVWTAVVMVLVPLNFSSGASPTVSLTLTITPINSVFNGLHHTAQGPIPVRPFHNFQQFSTTVPLRTEPCYGMTVTPPVDYMPLPITDLVELAKVPSFVTVANSDTTSERSFPYFSVSNTEQGRNLFKSSVVLSDLHYQHTLVANLARYFCNYRGSLQFDFIAATTAMTRGKLLISYTPPGAGEPQSIDQAMMGTYAIWDLGLQSTFNFVVPFISASDFRFNTSSVSNALNSDGWITVWLMNPLTYPPSTPPTQQILMLMSAGSDFSYRLPISPGFAEGETSEHPMDNAECGKIDDKDAGMFSGHSVGLPTPHTSTSFFYDRYRFVGIVKSVVNNTPKPVNIYDDTGKVKNLQQVFPTSDTLLPHSLMSLSPCASVCGQPISSFLFAQRANPKKTLKLRSGDEFLYRCCPFSYIKCDLEFTVVPPANSTRDYIVHWYPPGATLDAGEVAVGNTSGSNGFDDNGMNAGSSLFSYNPTFHARAPSKVSAVIPFCLPVSLLPLYFDGFPDYSTTKGMYGCSPSFSFGTIYIESGLQETYSVYIRYKDFKGYAPRPLIRTPHIRLSERARYIMADSVLPRPLTRAERDVARDLLLIAGDIESNPGPAFNPEYTAHGPVTELIQLARKPETVDNVNRLLTTLNTLMAKWNNLKDTVTDAVFLRDMVCLLVKLTSLMYLVHGQGPGAYFAAASILLADGITFFDWYEKIKIFMARKLRVSPPFFPAAQGPDLRDFVTFFNAARGAQWMIDSLKSLITCIKQWLELEEENEAVQLEKMLIDSPRHCKAINDYNRGDSFQRPTNSFEFMDRLVECATKLGKVQIATYFRNFTTADSDTSRPEPVVVVLRGKPGVGKSAAATVMAAAVSKLLVGSQSVYTLSPDTEHMDGYHGQFVTLMDDLGQNPDGEDFRCFCQMVSCAQYRPAMADLKDKGILFTSRLLIATTNLPDFNPVTISDPRALDRRITFDILVTPGSAATKNGKLDLAAALKPDGPGEHPYTSDCPILHTTGLLLKNLRNNQTMNLKDLVDMIVKRIKHKKEVGNMLDSLVAQGPTMIVGYTKDDDGIAIVDCLEEWNKIKDKKKKQLALEMVAQELKDKHEEHKGTIKLLKMFVTGLGVVAAVAGAYATMKYFTKDKPKEEEEEPEEKKEKKTEESKEAAGPYNGPTKKEIKTLKLKAQSPLMDMEKKIAQNVMPFQIFYNGKRYTQSCLAIGKRVILVNKHAFESVEHKFVVDQKEYTLDQVTAISLDCGSGVTDVCAVCLPPGPDFKSIKKHFLPFNTTMFPGTRLTILSNDHYPMSREGSFLRFEDEVPTNVGNMPFVMLYKSTSYFGMCGSVVCSRFVDGGGIIGMHCAGGGGVSVGTRLTARMIESVFDYFYPPVAQGIIENTETGPRVHVPRTSKLKRTNATYPATEKYGPAALSRYDPRLNEGVNLDEVIFSKHTQNTLVEKGSTFRSALDMAAEIYGEKFRGNDFSPLSVEDAILGIPGLDRLDPNTASGLPYTKTRRQMIDFNTGQILDDTLKCRLGQWLAGRPPQEVHYQTFLKDEIRPIEKVKAGKTRIIDVPPLDHVIAFRMLFGRFIAHYHLNFGFKTGSAIGCDPDVAWASFGFELSGFPYLYDFDYSNFDASHSTSIFEILEQKFFSPELGFDPRCSLLLKSLAVSTHCYENKRLQIAGGLPSGTAGTSVLNTVINNIIFHGALYHTYTNFERDDISMLAYGDDIVVASKFELDLVMVKAFMNRIGYKITPADKSDEFRPKCMDDICFLKRRFVKVAGVWAPVMETENLEAMLSWYKPGTLNEKLQSVSRLAHFSGRDVYDHLFKPFIRDGFDVTPWKQLHLEWLNKLSA.

G2 carries the N-myristoyl glycine; by host lipid modification. The interval 873–880 (VARDLLLI) is host EIF4E binding. The SF3 helicase domain maps to 1102 to 1264 (VQIATYFRNF…SAATKNGKLD (163 aa)). Position 1130–1137 (1130–1137 (GKPGVGKS)) interacts with ATP. Residues 1415 to 1437 (DKPKEEEEEPEEKKEKKTEESKE) are compositionally biased toward basic and acidic residues. A disordered region spans residues 1415–1446 (DKPKEEEEEPEEKKEKKTEESKEAAGPYNGPT). Y1442 bears the O-(5'-phospho-RNA)-tyrosine mark. The 190-residue stretch at 1459–1648 (SPLMDMEKKI…VGTRLTARMI (190 aa)) folds into the Peptidase C3 domain. Catalysis depends on for protease 3C activity residues H1501, D1535, and C1612. The region spanning 1893–2011 (PYLYDFDYSN…ASKFELDLVM (119 aa)) is the RdRp catalytic domain. Catalysis depends on for RdRp activity residues D1899 and D1997.

This sequence belongs to the picornaviruses polyprotein family. Interacts with host EIF4E. As to quaternary structure, interacts with host IFIH1/MDA5; this interaction inhibits the induction of the IFN-beta signal pathway. In terms of processing, specific enzymatic cleavages by the viral protease in vivo yield a variety of precursors and mature proteins. The polyprotein seems to be cotranslationally cleaved at the 2A/2B junction by a ribosomal skip from one codon to the next without formation of a peptide bond. This process would release the P1-2A peptide from the translational complex. During virion maturation, immature virions are rendered infectious following cleavage of VP0 into VP4 and VP2. This maturation seems to be an autocatalytic event triggered by the presence of RNA in the capsid and is followed by a conformational change of the particle. Post-translationally, myristoylation is required during RNA encapsidation and formation of the mature virus particle. In terms of processing, uridylylated by the polymerase and is covalently linked to the 5'-end of genomic RNA. This uridylylated form acts as a nucleotide-peptide primer for the polymerase.

It is found in the virion. The protein localises to the host cytoplasm. Its subcellular location is the host nucleus. It localises to the host nucleolus. The protein resides in the host cytoplasmic vesicle membrane. It catalyses the reaction RNA(n) + a ribonucleoside 5'-triphosphate = RNA(n+1) + diphosphate. It carries out the reaction ATP + H2O = ADP + phosphate + H(+). The catalysed reaction is Selective cleavage of Gln-|-Gly bond in the poliovirus polyprotein. In other picornavirus reactions Glu may be substituted for Gln, and Ser or Thr for Gly.. In terms of biological role, forms an icosahedral capsid of pseudo T=3 symmetry with capsid proteins VP2 and VP3. Together they form an icosahedral capsid composed of 60 copies of each VP1, VP2, and VP3, with a diameter of approximately 300 Angstroms. VP4 lies on the inner surface of the protein shell formed by VP1, VP2 and VP3. All the three latter proteins contain a beta-sheet structure called beta-barrel jelly roll. VP1 is situated at the 12 fivefold axes, whereas VP2 and VP3 are located at the quasi-sixfold axes. Its function is as follows. Lies on the inner surface of the capsid shell. After binding to the host receptor, the capsid undergoes conformational changes. Capsid protein VP4 is released, capsid protein VP1 N-terminus is externalized, and together, they shape a pore in the host membrane through which the viral genome is translocated into the host cell cytoplasm. After genome has been released, the channel shrinks. Functionally, VP0 precursor is a component of immature procapsids. Involved in host translation shutoff by inhibiting cap-dependent mRNA translation. Nuclear localization is required for this function. The resulting inhibition of cellular protein synthesis serves to ensure maximal viral gene expression and to evade host immune response. In terms of biological role, affects membrane integrity and causes an increase in membrane permeability. Its function is as follows. Associates with and induces structural rearrangements of intracellular membranes. It displays RNA-binding, nucleotide binding and NTPase activities. Interacts with IFIH1/MDA5 to inhibit the induction of the IFN-beta signal pathway. Functionally, serves as membrane anchor via its hydrophobic domain. Forms a primer, VPg-pU, which is utilized by the polymerase for the initiation of RNA chains. In terms of biological role, cysteine protease that generates mature viral proteins from the precursor polyprotein. In addition to its proteolytic activity, it binds to viral RNA, and thus influences viral genome replication. RNA and substrate cooperatively bind to the protease. Cleaves host PABP1, this cleavage is important for viral replication. Cleaves host TANK and disrupts the TANK-TBK1-IKKepsilon-IRF3 complex, thereby inhibiting the induction of the IFN-beta signal pathway. Its function is as follows. Replicates the genomic and antigenomic RNAs by recognizing replications specific signals. Performs VPg uridylylation. The chain is Genome polyprotein from Cosavirus A (isolate Human/Pakistan/0553/-) (HCoSV-A).